A 341-amino-acid chain; its full sequence is D-aspartate oxidase (341 aa).

FAD is bound by residues Asp-36, Arg-37, Thr-43, Ser-44, Met-50, Gly-307, Ile-311, and Ser-312. Positions 339–341 (SKL) match the Microbody targeting signal motif.

The protein belongs to the DAMOX/DASOX family. As to quaternary structure, dimer or tetramer. Interacts with PEX5; the interaction is direct and required for localization of DDO to the peroxisome. Requires FAD as cofactor. In terms of tissue distribution, expressed in the small intestine (at protein level). Expressed in the ependymal cell layer of the telencephalic ventricles, hippocampus, thalamus, cerebellum, midbrain region, pons, olfactory bulbs, and cortex. Repressed in the testis. As to expression, expressed in the kidney, liver, stomach, pancreas, uterus, lactating breast, involuting mammary gland, brain, heart, lung, and skin. Expressed in kidney, liver, pancreas, and in the mammary gland regardless of lactation status.

Its subcellular location is the peroxisome matrix. It is found in the cytoplasm. The protein resides in the cytosol. The enzyme catalyses D-aspartate + O2 + H2O = oxaloacetate + H2O2 + NH4(+). It catalyses the reaction D-glutamate + O2 + H2O = H2O2 + 2-oxoglutarate + NH4(+). With respect to regulation, inhibited by the benzodiazepine olanzapine; chronic systemic administration of the benzodiazepine increases levels of D-aspartate and L-glutamate in the prefrontal cortex. Efficiently inhibited by 5-aminonicotinic acid (5-AN) and 1,4-Dihydropyrido[2,3-b]pyrazine-2,3-dione (DPPD). Inhibited by aminooxyacetic acid, thiolactomycin, anthranilic acid, malonate, meso-tartrate and L-tartrate. Benzoate has no effect on activity. Selectively catalyzes the oxidative deamination of acidic amino acids. Suppresses the level of D-aspartate in the brain, an amino acid that can act as an agonist for glutamate receptors. Protects the organism from the toxicity of D-amino acids. May also function in the intestine. Functionally, selectively catalyzes the oxidative deamination of acidic amino acids. Its function is as follows. Does not exhibit D-aspartate oxidase activity. This Mus musculus (Mouse) protein is D-aspartate oxidase (Ddo).